The sequence spans 387 residues: Alpha-maltose-1-phosphate synthase (387 aa).

It belongs to the glycosyltransferase group 1 family.

The enzyme catalyses ADP-alpha-D-glucose + alpha-D-glucose 1-phosphate = alpha-maltose 1-phosphate + ADP + H(+). The protein operates within capsule biogenesis; capsule polysaccharide biosynthesis. It participates in glycan biosynthesis; glycogen biosynthesis. In terms of biological role, involved in the biosynthesis of the maltose-1-phosphate (M1P) building block required for alpha-glucan production by the key enzyme GlgE. Catalyzes the formation of an alpha-1,4 linkage between glucose from ADP-glucose and glucose 1-phosphate (G1P) to yield maltose-1-phosphate (M1P). In Mycobacterium tuberculosis (strain CDC 1551 / Oshkosh), this protein is Alpha-maltose-1-phosphate synthase.